Reading from the N-terminus, the 202-residue chain is Orotate phosphoribosyltransferase (202 aa).

Residues Lys-93 and 113-121 each bind 5-phospho-alpha-D-ribose 1-diphosphate; that span reads EDIITTGGS. 2 residues coordinate orotate: Thr-117 and Arg-145.

It belongs to the purine/pyrimidine phosphoribosyltransferase family. PyrE subfamily. Homodimer. Requires Mg(2+) as cofactor.

It carries out the reaction orotidine 5'-phosphate + diphosphate = orotate + 5-phospho-alpha-D-ribose 1-diphosphate. The protein operates within pyrimidine metabolism; UMP biosynthesis via de novo pathway; UMP from orotate: step 1/2. Its function is as follows. Catalyzes the transfer of a ribosyl phosphate group from 5-phosphoribose 1-diphosphate to orotate, leading to the formation of orotidine monophosphate (OMP). The polypeptide is Orotate phosphoribosyltransferase (Campylobacter jejuni subsp. jejuni serotype O:23/36 (strain 81-176)).